Reading from the N-terminus, the 91-residue chain is Elongation factor 1-beta (91 aa).

Belongs to the EF-1-beta/EF-1-delta family.

Promotes the exchange of GDP for GTP in EF-1-alpha/GDP, thus allowing the regeneration of EF-1-alpha/GTP that could then be used to form the ternary complex EF-1-alpha/GTP/AAtRNA. This Caldivirga maquilingensis (strain ATCC 700844 / DSM 13496 / JCM 10307 / IC-167) protein is Elongation factor 1-beta.